We begin with the raw amino-acid sequence, 61 residues long: Large ribosomal subunit protein bL32 (61 aa).

The interval 1 to 22 is disordered; it reads MAVPKQKSSKSRGRKRRTHQKV. Residues 7–20 show a composition bias toward basic residues; it reads KSSKSRGRKRRTHQ.

The protein belongs to the bacterial ribosomal protein bL32 family.

The sequence is that of Large ribosomal subunit protein bL32 from Desulforapulum autotrophicum (strain ATCC 43914 / DSM 3382 / VKM B-1955 / HRM2) (Desulfobacterium autotrophicum).